The chain runs to 188 residues: Oleosin S2-2 (188 aa).

A2 carries the post-translational modification N-acetylalanine. Residues 2–51 form a polar region; it reads ATVERRVQVDPTDKRIHLQPQYEGDVGYGYGYGGRADYKSSGPSSNQIVA. Helical transmembrane passes span 49 to 69, 74 to 94, and 96 to 116; these read IVAL…AGLT, VIGL…IVPA, and ITIG…LTGL. The interval 52–125 is hydrophobic; that stretch reads LIVGVPVGGS…LSSVSWVLNY (74 aa). A disordered region spans residues 164–188; the sequence is DKAHEAHDTSLTTETTEPGKTRRHT. The span at 172–181 shows a compositional bias: polar residues; sequence TSLTTETTEP.

This sequence belongs to the oleosin family.

Its subcellular location is the lipid droplet. The protein localises to the membrane. In terms of biological role, may have a structural role to stabilize the lipid body during desiccation of the seed by preventing coalescence of the oil. Probably interacts with both lipid and phospholipid moieties of lipid bodies. May also provide recognition signals for specific lipase anchorage in lipolysis during seedling growth. This is Oleosin S2-2 (S2) from Brassica napus (Rape).